The chain runs to 240 residues: 2,3-bisphosphoglycerate-dependent phosphoglycerate mutase (240 aa).

Substrate is bound by residues 5-12, 18-19, Arg57, 84-87, Lys95, 111-112, and 180-181; these read RHGESVWN, TG, ERHY, RR, and GN. The active-site Tele-phosphohistidine intermediate is the His6. Glu84 (proton donor/acceptor) is an active-site residue.

It belongs to the phosphoglycerate mutase family. BPG-dependent PGAM subfamily. Homodimer.

It catalyses the reaction (2R)-2-phosphoglycerate = (2R)-3-phosphoglycerate. The protein operates within carbohydrate degradation; glycolysis; pyruvate from D-glyceraldehyde 3-phosphate: step 3/5. Catalyzes the interconversion of 2-phosphoglycerate and 3-phosphoglycerate. The sequence is that of 2,3-bisphosphoglycerate-dependent phosphoglycerate mutase from Nitrosococcus oceani (strain ATCC 19707 / BCRC 17464 / JCM 30415 / NCIMB 11848 / C-107).